Here is a 309-residue protein sequence, read N- to C-terminus: Homoserine O-succinyltransferase (309 aa).

The active-site Acyl-thioester intermediate is cysteine 142. Residues lysine 163 and serine 192 each coordinate substrate. Histidine 235 acts as the Proton acceptor in catalysis. Residue glutamate 237 is part of the active site. Arginine 249 is a substrate binding site.

Belongs to the MetA family.

Its subcellular location is the cytoplasm. It carries out the reaction L-homoserine + succinyl-CoA = O-succinyl-L-homoserine + CoA. It participates in amino-acid biosynthesis; L-methionine biosynthesis via de novo pathway; O-succinyl-L-homoserine from L-homoserine: step 1/1. In terms of biological role, transfers a succinyl group from succinyl-CoA to L-homoserine, forming succinyl-L-homoserine. This chain is Homoserine O-succinyltransferase, found in Enterobacter sp. (strain 638).